A 345-amino-acid chain; its full sequence is IGF-like family receptor 1 (345 aa).

An N-terminal signal peptide occupies residues 1–20 (MGPSWLLWTVAVAVLLLTRA). Topologically, residues 21–163 (ASMEASSFCG…SSRPGFVSAS (143 aa)) are extracellular. N-linked (GlcNAc...) asparagine glycosylation is present at Asn87. The tract at residues 106 to 149 (VESPGRTHKQCRKKPVPPKDVCPLKPEDAGASSSPGRWSLGQTT) is disordered. Residues 111 to 121 (RTHKQCRKKPV) are compositionally biased toward basic residues. Polar residues predominate over residues 136–149 (ASSSPGRWSLGQTT). Residues 164–184 (VLPLAVLPLLLVLLLILAVVL) form a helical membrane-spanning segment. Residues 185–345 (LSLFKRKVRS…DALQVLSKLG (161 aa)) lie on the Cytoplasmic side of the membrane.

In terms of tissue distribution, ubiquitously expressed with higher expression in lymph node. Highly expressed in T-cells and monocytes.

It localises to the cell membrane. In terms of biological role, probable cell membrane receptor for the IGF-like family protein IGFL. This is IGF-like family receptor 1 (Igflr1) from Mus musculus (Mouse).